A 138-amino-acid chain; its full sequence is Ribosome-binding factor A (138 aa).

Belongs to the RbfA family. Monomer. Binds 30S ribosomal subunits, but not 50S ribosomal subunits or 70S ribosomes.

Its subcellular location is the cytoplasm. Its function is as follows. One of several proteins that assist in the late maturation steps of the functional core of the 30S ribosomal subunit. Associates with free 30S ribosomal subunits (but not with 30S subunits that are part of 70S ribosomes or polysomes). Required for efficient processing of 16S rRNA. May interact with the 5'-terminal helix region of 16S rRNA. The sequence is that of Ribosome-binding factor A from Chromobacterium violaceum (strain ATCC 12472 / DSM 30191 / JCM 1249 / CCUG 213 / NBRC 12614 / NCIMB 9131 / NCTC 9757 / MK).